The chain runs to 506 residues: Apolipoprotein N-acyltransferase (506 aa).

A run of 7 helical transmembrane segments spans residues 10–30, 33–53, 57–77, 105–125, 139–159, 176–196, and 205–225; these read ANAK…AGWG, LALP…PLWW, VLAP…FYGS, IWLC…LLMA, WGVT…LWWI, LAGP…VTLS, and VGLA…SVRV. One can recognise a CN hydrolase domain in the interval 238–473; sequence IQGNIPTREK…FVIYAATIFR (236 aa). The active-site Proton acceptor is the Glu279. Lys336 is a catalytic residue. Catalysis depends on Cys385, which acts as the Nucleophile. Residues 483-500 traverse the membrane as a helical segment; that stretch reads YGDWLLPLLLGMLSLSVL.

It belongs to the CN hydrolase family. Apolipoprotein N-acyltransferase subfamily.

It is found in the cell inner membrane. The catalysed reaction is N-terminal S-1,2-diacyl-sn-glyceryl-L-cysteinyl-[lipoprotein] + a glycerophospholipid = N-acyl-S-1,2-diacyl-sn-glyceryl-L-cysteinyl-[lipoprotein] + a 2-acyl-sn-glycero-3-phospholipid + H(+). The protein operates within protein modification; lipoprotein biosynthesis (N-acyl transfer). Catalyzes the phospholipid dependent N-acylation of the N-terminal cysteine of apolipoprotein, the last step in lipoprotein maturation. The polypeptide is Apolipoprotein N-acyltransferase (Thermosynechococcus vestitus (strain NIES-2133 / IAM M-273 / BP-1)).